The chain runs to 279 residues: MKLCVALDLSTKEECLQLAKELKNLDIWLKVGLRAYLRDGFKFIEELKKVDDFKIFLDLKFHDIPNTMADACEEVSKLGVDMINIHASAGKIAIQEVMTRLSKFSKRPLVLAVSALTSFDEENFFSIYRQKIEEAVINFSKISYENGLDGMVCSVFESKKIKEHTSSNFLTLTPGIRPFGETNDDQKRVANLAMARENLSDYIVVGRPIYKNENPRAVCEKILNKIHRKNISENDIEQNYEVIQQKEWDMCNHFEEWIKTRPDKEHALKEFYAKCGIKY.

Substrate-binding positions include aspartate 8, lysine 30, 58-67 (DLKFHDIPNT), threonine 117, arginine 177, glutamine 186, glycine 206, and arginine 207. Catalysis depends on lysine 60, which acts as the Proton donor.

The protein belongs to the OMP decarboxylase family. Type 1 subfamily. Homodimer.

The enzyme catalyses orotidine 5'-phosphate + H(+) = UMP + CO2. The protein operates within pyrimidine metabolism; UMP biosynthesis via de novo pathway; UMP from orotate: step 2/2. Functionally, catalyzes the decarboxylation of orotidine 5'-monophosphate (OMP) to uridine 5'-monophosphate (UMP). The polypeptide is Orotidine 5'-phosphate decarboxylase (Campylobacter jejuni subsp. jejuni serotype O:2 (strain ATCC 700819 / NCTC 11168)).